Here is a 172-residue protein sequence, read N- to C-terminus: MERAIQGSDAREQAYSERWDGGCGGTITPFKLPDESPSLIEWRLHNSEESEDKDNPLGFKESWSFGKVVFKRYLRYDGTEASLHRALGSWERDTVNNAASRFLGFGQIGCTYCIRFRGSCLTISGGSRTLQRLIEMAIRTKRTMLQLTPCEVEGNVSRGSPEGTEAFKEESE.

Residues 153 to 172 (EGNVSRGSPEGTEAFKEESE) are disordered.

Belongs to the tombusvirus protein p19 family. As to quaternary structure, homodimer.

Functionally, viral suppressor of RNA silencing which binds specifically to silencing RNAs (siRNAs). Acts as a molecular caliper to specifically select siRNAs based on the length of the duplex region of the RNA. The protein is RNA silencing suppressor p19 of Pear latent virus (PeLV).